The chain runs to 469 residues: tRNA modification GTPase MnmE (469 aa).

Residues R38, E95, and R134 each coordinate (6S)-5-formyl-5,6,7,8-tetrahydrofolate. Positions 230 to 392 constitute a TrmE-type G domain; it reads GIRVALVGPP…LRRGLAALVD (163 aa). GTP is bound by residues 240–245, 259–265, and 284–287; these read NAGKSS, SAQAGTT, and DTAG. Positions 244 and 265 each coordinate Mg(2+). A (6S)-5-formyl-5,6,7,8-tetrahydrofolate-binding site is contributed by K468.

Belongs to the TRAFAC class TrmE-Era-EngA-EngB-Septin-like GTPase superfamily. TrmE GTPase family. In terms of assembly, homodimer. Heterotetramer of two MnmE and two MnmG subunits. The cofactor is K(+).

Its subcellular location is the cytoplasm. In terms of biological role, exhibits a very high intrinsic GTPase hydrolysis rate. Involved in the addition of a carboxymethylaminomethyl (cmnm) group at the wobble position (U34) of certain tRNAs, forming tRNA-cmnm(5)s(2)U34. The sequence is that of tRNA modification GTPase MnmE from Halorhodospira halophila (strain DSM 244 / SL1) (Ectothiorhodospira halophila (strain DSM 244 / SL1)).